The chain runs to 346 residues: tRNA N6-adenosine threonylcarbamoyltransferase (346 aa).

2 residues coordinate Fe cation: histidine 110 and histidine 114. Substrate is bound by residues 132–136 (LLSGG), aspartate 165, glycine 178, and asparagine 274. Aspartate 298 contributes to the Fe cation binding site.

It belongs to the KAE1 / TsaD family. The cofactor is Fe(2+).

It is found in the cytoplasm. It carries out the reaction L-threonylcarbamoyladenylate + adenosine(37) in tRNA = N(6)-L-threonylcarbamoyladenosine(37) in tRNA + AMP + H(+). In terms of biological role, required for the formation of a threonylcarbamoyl group on adenosine at position 37 (t(6)A37) in tRNAs that read codons beginning with adenine. Is involved in the transfer of the threonylcarbamoyl moiety of threonylcarbamoyl-AMP (TC-AMP) to the N6 group of A37, together with TsaE and TsaB. TsaD likely plays a direct catalytic role in this reaction. The polypeptide is tRNA N6-adenosine threonylcarbamoyltransferase (Borreliella afzelii (strain PKo) (Borrelia afzelii)).